The following is a 372-amino-acid chain: MSKKILFLIKVIVFIFTTFSLPLYAEKIRDLTSIQGIRDNPLIGYGLIVGLDGTGDQSTQAPFTNQSLKNMLSQLGVSIPSNTNMNTKNVAAVIVTANLPPFSHAGEKIDVVVSSMGNARSLKGGTLLMTPLKGANNQIYAIAQGNILVSEKNNKKSKIHNFYSNQVNSGKIHHGATIEREIDNNFGKQKTINLQLNQENFSTAQRISDMINTKYPDTATPINSKTVQLNTSANNDVQVHMLSNIQDIDISLPSQEAKVVVNSRTGSIVINQSVRLGSCVVSNGNMSIIVHQIKNKKRDLYFLKSFNKNIKKDQSIEDMADKNYMNDIATNKENLHNIVRALNKLGTKPDELMSILQLMKSAGCLNAKLEIV.

The N-terminal stretch at 1–25 (MSKKILFLIKVIVFIFTTFSLPLYA) is a signal peptide.

The protein belongs to the FlgI family. In terms of assembly, the basal body constitutes a major portion of the flagellar organelle and consists of four rings (L,P,S, and M) mounted on a central rod.

The protein localises to the bacterial flagellum basal body. Functionally, assembles around the rod to form the L-ring and probably protects the motor/basal body from shearing forces during rotation. In Buchnera aphidicola subsp. Acyrthosiphon pisum (strain APS) (Acyrthosiphon pisum symbiotic bacterium), this protein is Flagellar P-ring protein (flgI).